The primary structure comprises 553 residues: Arginine--tRNA ligase (553 aa).

The 'HIGH' region motif lies at 122–132 (ANPTGFLHVGH).

The protein belongs to the class-I aminoacyl-tRNA synthetase family. As to quaternary structure, monomer.

The protein localises to the cytoplasm. It catalyses the reaction tRNA(Arg) + L-arginine + ATP = L-arginyl-tRNA(Arg) + AMP + diphosphate. This is Arginine--tRNA ligase from Mesoplasma florum (strain ATCC 33453 / NBRC 100688 / NCTC 11704 / L1) (Acholeplasma florum).